A 180-amino-acid polypeptide reads, in one-letter code: MGDKKSPTRPKRQPKPSSDEGYWDCSVCTFRNSAEAFKCMMCDVRKGTSTRKPRPVSQLVAQQVTQQFVPPTQSKKEKKDKVEKEKSEKETTSKKNSHKKTRPRLKNVDRSSAQHLEVTVGDLTVIITDFKEKTKSPPASSAASADQHSQSGSSSDNTERGMSRSSSPRGEASSLNGESH.

Disordered regions lie at residues 1 to 24 (MGDK…GYWD), 47 to 120 (GTST…EVTV), and 132 to 180 (EKTK…GESH). Residues 19–48 (DEGYWDCSVCTFRNSAEAFKCMMCDVRKGT) form a RanBP2-type zinc finger. Over residues 62 to 73 (QQVTQQFVPPTQ) the composition is skewed to low complexity. Positions 74 to 93 (SKKEKKDKVEKEKSEKETTS) are enriched in basic and acidic residues. A compositionally biased stretch (basic residues) spans 95–105 (KNSHKKTRPRL). Composition is skewed to low complexity over residues 136 to 156 (SPPA…SSSD) and 163 to 174 (SRSSSPRGEASS). Residue serine 167 is modified to Phosphoserine.

As to quaternary structure, interacts with MYC, MYCN, RNF2/RING1B and YY1. Part of the E2F6.com-1 complex in G0 phase composed of E2F6, MGA, MAX, TFDP1, CBX3, BAT8, EUHMTASE1, RING1, RNF2, MBLR, L3MBTL2 and YAF2.

The protein resides in the nucleus. Functionally, binds to MYC and inhibits MYC-mediated transactivation. Also binds to MYCN and enhances MYCN-dependent transcriptional activation. Increases calpain 2-mediated proteolysis of YY1 in vitro. Component of the E2F6.com-1 complex, a repressive complex that methylates 'Lys-9' of histone H3, suggesting that it is involved in chromatin-remodeling. The protein is YY1-associated factor 2 (YAF2) of Homo sapiens (Human).